Reading from the N-terminus, the 422-residue chain is Glutamyl-tRNA reductase (422 aa).

Substrate is bound by residues 49-52 (TCNR), Ser-110, 115-117 (EPQ), and Gln-121. The active-site Nucleophile is the Cys-50. An NADP(+)-binding site is contributed by 190 to 195 (GAGETI).

This sequence belongs to the glutamyl-tRNA reductase family. In terms of assembly, homodimer.

It catalyses the reaction (S)-4-amino-5-oxopentanoate + tRNA(Glu) + NADP(+) = L-glutamyl-tRNA(Glu) + NADPH + H(+). Its pathway is porphyrin-containing compound metabolism; protoporphyrin-IX biosynthesis; 5-aminolevulinate from L-glutamyl-tRNA(Glu): step 1/2. Catalyzes the NADPH-dependent reduction of glutamyl-tRNA(Glu) to glutamate 1-semialdehyde (GSA). The sequence is that of Glutamyl-tRNA reductase from Colwellia psychrerythraea (strain 34H / ATCC BAA-681) (Vibrio psychroerythus).